A 355-amino-acid polypeptide reads, in one-letter code: uncharacterized protein (355 aa).

Belongs to the serpin family. Poxviruses subfamily.

This is an uncharacterized protein from Vertebrata (FPV).